The primary structure comprises 147 residues: Deoxyuridine 5'-triphosphate nucleotidohydrolase (147 aa).

Substrate is bound by residues 67 to 69, asparagine 80, and 84 to 86; these read RSG and TID.

It belongs to the dUTPase family. Mg(2+) serves as cofactor.

It carries out the reaction dUTP + H2O = dUMP + diphosphate + H(+). The protein operates within pyrimidine metabolism; dUMP biosynthesis; dUMP from dCTP (dUTP route): step 2/2. Functionally, this enzyme is involved in nucleotide metabolism: it produces dUMP, the immediate precursor of thymidine nucleotides and it decreases the intracellular concentration of dUTP so that uracil cannot be incorporated into DNA. In Anaplasma marginale (strain St. Maries), this protein is Deoxyuridine 5'-triphosphate nucleotidohydrolase.